A 185-amino-acid chain; its full sequence is Ribosome-recycling factor (185 aa).

Lysine 162 is subject to N6-acetyllysine.

Belongs to the RRF family.

The protein localises to the cytoplasm. Responsible for the release of ribosomes from messenger RNA at the termination of protein biosynthesis. May increase the efficiency of translation by recycling ribosomes from one round of translation to another. The chain is Ribosome-recycling factor from Shigella boydii serotype 18 (strain CDC 3083-94 / BS512).